The primary structure comprises 90 residues: DNA-directed RNA polymerase subunit omega (90 aa).

This sequence belongs to the RNA polymerase subunit omega family. In terms of assembly, the RNAP catalytic core consists of 2 alpha, 1 beta, 1 beta' and 1 omega subunit. When a sigma factor is associated with the core the holoenzyme is formed, which can initiate transcription.

The catalysed reaction is RNA(n) + a ribonucleoside 5'-triphosphate = RNA(n+1) + diphosphate. In terms of biological role, promotes RNA polymerase assembly. Latches the N- and C-terminal regions of the beta' subunit thereby facilitating its interaction with the beta and alpha subunits. This chain is DNA-directed RNA polymerase subunit omega (rpoZ), found in Streptomyces coelicolor (strain ATCC BAA-471 / A3(2) / M145).